We begin with the raw amino-acid sequence, 726 residues long: Peroxisomal bifunctional enzyme (726 aa).

The segment at 1–284 is enoyl-CoA hydratase / isomerase; the sequence is MAEYLRLPHS…FAERSAPKWS (284 aa). An N6-succinyllysine modification is found at K38. G103 contributes to the substrate binding site. At K167 the chain carries N6-acetyllysine; alternate. K167 carries the post-translational modification N6-succinyllysine; alternate. The residue at position 173 (K173) is an N6-acetyllysine. K185 is modified (N6-succinyllysine). The residue at position 221 (K221) is an N6-acetyllysine; alternate. An N6-succinyllysine; alternate modification is found at K221. An N6-succinyllysine mark is found at K282, K292, and K333. The segment at 285 to 575 is 3-hydroxyacyl-CoA dehydrogenase; that stretch reads TPSGASWKTA…DMLCELGRFG (291 aa). Residues K348 and K352 each carry the N6-acetyllysine modification. A disordered region spans residues 352–371; it reads KSRQQCGQQRSGPKPRFSSS. The segment covering 353-371 has biased composition (polar residues); it reads SRQQCGQQRSGPKPRFSSS. N6-acetyllysine is present on K467. Position 535 is an N6-succinyllysine (K535). N6-acetyllysine; alternate is present on residues K587, K594, and K713. An N6-succinyllysine; alternate mark is found at K587, K594, and K713. Residues 724–726 carry the Microbody targeting signal motif; the sequence is SKL. Residue K725 is modified to N6-succinyllysine.

This sequence in the N-terminal section; belongs to the enoyl-CoA hydratase/isomerase family. It in the C-terminal section; belongs to the 3-hydroxyacyl-CoA dehydrogenase family. In terms of assembly, monomer. Acetylated, leading to enhanced enzyme activity. Acetylation is enhanced by up to 80% after treatment either with trichostin A (TSA) or with nicotinamide (NAM) with highest increase on Lys-348. Acetylation and enzyme activity increased by about 1.5% on addition of fatty acids.

The protein localises to the peroxisome. The catalysed reaction is a (3S)-3-hydroxyacyl-CoA = a (2E)-enoyl-CoA + H2O. It catalyses the reaction a 4-saturated-(3S)-3-hydroxyacyl-CoA = a (3E)-enoyl-CoA + H2O. The enzyme catalyses a (3Z)-enoyl-CoA = a 4-saturated (2E)-enoyl-CoA. It carries out the reaction a (3E)-enoyl-CoA = a 4-saturated (2E)-enoyl-CoA. The catalysed reaction is a (3S)-3-hydroxyacyl-CoA + NAD(+) = a 3-oxoacyl-CoA + NADH + H(+). It catalyses the reaction (2S,3S)-3-hydroxy-2-methylbutanoyl-CoA = (2E)-2-methylbut-2-enoyl-CoA + H2O. The enzyme catalyses (3S)-hydroxyhexadecanoyl-CoA + NAD(+) = 3-oxohexadecanoyl-CoA + NADH + H(+). It carries out the reaction (3S)-hydroxyhexadecanoyl-CoA = (2E)-hexadecenoyl-CoA + H2O. The catalysed reaction is (2E)-hexadecenedioyl-CoA + H2O = (3S)-hydroxyhexadecanedioyl-CoA. It catalyses the reaction (3S)-hydroxyhexadecanedioyl-CoA + NAD(+) = 3-oxohexadecanedioyl-CoA + NADH + H(+). The enzyme catalyses (3E,5Z)-tetradecadienoyl-CoA = (2E,5Z)-tetradecadienoyl-CoA. It carries out the reaction (3E,5Z)-octadienoyl-CoA = (2E,5Z)-octadienoyl-CoA. The catalysed reaction is (3S)-hydroxydecanoyl-CoA + NAD(+) = 3-oxodecanoyl-CoA + NADH + H(+). It catalyses the reaction (3E)-decenoyl-CoA = (2E)-decenoyl-CoA. The enzyme catalyses (3Z)-hexenoyl-CoA = (2E)-hexenoyl-CoA. It carries out the reaction (3E)-hexenoyl-CoA = (2E)-hexenoyl-CoA. The catalysed reaction is (3S)-hydroxydecanoyl-CoA = (2E)-decenoyl-CoA + H2O. It catalyses the reaction (3S)-hydroxyhexanoyl-CoA = (2E)-hexenoyl-CoA + H2O. It functions in the pathway lipid metabolism; fatty acid beta-oxidation. Its activity is regulated as follows. Enzyme activity enhanced by acetylation. Functionally, peroxisomal trifunctional enzyme possessing 2-enoyl-CoA hydratase, 3-hydroxyacyl-CoA dehydrogenase, and delta 3, delta 2-enoyl-CoA isomerase activities. Catalyzes two of the four reactions of the long chain fatty acids peroxisomal beta-oxidation pathway. Can also use branched-chain fatty acids such as 2-methyl-2E-butenoyl-CoA as a substrate, which is hydrated into (2S,3S)-3-hydroxy-2-methylbutanoyl-CoA. Optimal isomerase for 2,5 double bonds into 3,5 form isomerization in a range of enoyl-CoA species. Also able to isomerize both 3-cis and 3-trans double bonds into the 2-trans form in a range of enoyl-CoA species. Regulates the amount of medium-chain dicarboxylic fatty acids which are essential regulators of all fatty acid oxidation pathways. Also involved in the degradation of long-chain dicarboxylic acids through peroxisomal beta-oxidation. The protein is Peroxisomal bifunctional enzyme (EHHADH) of Cavia porcellus (Guinea pig).